The primary structure comprises 376 residues: Alanine racemase (376 aa).

The active-site Proton acceptor; specific for D-alanine is the K40. An N6-(pyridoxal phosphate)lysine modification is found at K40. A substrate-binding site is contributed by R138. Y270 serves as the catalytic Proton acceptor; specific for L-alanine. M317 is a binding site for substrate.

Belongs to the alanine racemase family. Requires pyridoxal 5'-phosphate as cofactor.

The enzyme catalyses L-alanine = D-alanine. It participates in amino-acid biosynthesis; D-alanine biosynthesis; D-alanine from L-alanine: step 1/1. Its function is as follows. Catalyzes the interconversion of L-alanine and D-alanine. May also act on other amino acids. The protein is Alanine racemase (alr) of Lactobacillus delbrueckii subsp. bulgaricus (strain ATCC 11842 / DSM 20081 / BCRC 10696 / JCM 1002 / NBRC 13953 / NCIMB 11778 / NCTC 12712 / WDCM 00102 / Lb 14).